The chain runs to 182 residues: Interferon gamma 1 (182 aa).

An N-terminal signal peptide occupies residues 1-21; it reads MIAQNMTIFFWGVCLLTSGWA. An N-linked (GlcNAc...) asparagine glycan is attached at Asn93.

It belongs to the type II (or gamma) interferon family. As to quaternary structure, homodimer. Highly expressed in spleen. Also detected at lower levels in brain, gill, kidney, heart, intestine and muscle. In immune cell populations, has highest expression in peripheral blood leukocytes and splenocytes. Detected in kidney-derived monocytes, neutrophils, macrophages and leukocytes.

The protein localises to the secreted. Cytokine which binds to interferon gamma receptor 1-like (ifngr1l). Has activating effects on primary macrophages and neutrophils. Induces nitric oxide production and phagocytic responses in macrophages. Primes macrophages and neutrophils for production of reactive oxygen intermediates (ROI). Stimulates phosphorylation and nuclear localization of the JAK/STAT signal transducer stat1. Promotes increased expression of a number of genes important for macrophage activity, including the interferon regulatory factors irf1, irf2, irf8 and irf9. This chain is Interferon gamma 1, found in Carassius auratus (Goldfish).